A 377-amino-acid chain; its full sequence is Enoyl reductase cheB (377 aa).

The segment at 18–361 (GGSLVIARDV…REISAEKLVV (344 aa)) is enoyl reductase (ER) domain. Position 49-52 (49-52 (CDFK)) interacts with NADP(+). Substrate is bound at residue 137–144 (PCCIATMG). Residues 173–176 (SSSV), 200–203 (SPKN), Tyr-218, 265–266 (LE), and Thr-283 contribute to the NADP(+) site. 285-289 (GAIII) lines the substrate pocket. 354-355 (IS) serves as a coordination point for NADP(+).

It belongs to the zinc-containing alcohol dehydrogenase family. Heme is required as a cofactor.

The protein operates within secondary metabolite biosynthesis. Its function is as follows. Enoyl reductase; part of the gene cluster that mediates the biosynthesis of chaetoglobosin A which has a unique inhibitory activity against actin polymerization in mammalian cells. Chaetoglobosin A and its intermediates are involved in the morphological differentiation of C.globosum. The first step of the pathway is the synthesis of prochaetoglobosin I via condensation of one acetyl-CoA, 8 malonyl-CoA, and a L-tryptophan molecule by the PKS-NRPS hybrid synthetase cheA, followed by reduction of backbone double bond to install desired geometry by the enoyl reductase cheB. Further multiple oxidation steps performed by the cytochrome P450 monooxygenases cheE and cheG, as well as by the FAD-linked oxidoreductase cheF, lead to the formation of chaetoglobosin A. Depending on the order of action of these reductases, distinct intermediates can be identified. Within the pathway, the cytochrome P450 monooxygenase cheE catalyzes a stereospecific epoxidation on prochaetoglobosin I, cytoglobosin D, and chaetoglobosin J intermediates. The FAD-linked oxidoreductase cheF performs dehydrogenation of the C-20 hydroxyl groups in the 20-dihyrochaetoglobosin A and cytoglobosin D intermediates. Finally, the cytochrome P450 monooxygenase cheG can catalyze the stereospecific dihydroxylation of prochaetoglobosin I and prochaetoglobosin IV at C-19 and C-20, respectively. The Diels-Alderase cheD may play a role in the post-PKS-NRPS biosynthetic steps catalyzing Diels-Alder cyclization. The polypeptide is Enoyl reductase cheB (Chaetomium globosum (strain ATCC 6205 / CBS 148.51 / DSM 1962 / NBRC 6347 / NRRL 1970) (Soil fungus)).